The following is a 540-amino-acid chain: Chaperonin GroEL (540 aa).

ATP-binding positions include 29–32 (TLGP), 86–90 (DGTTT), Gly413, 476–478 (NAA), and Asp492.

This sequence belongs to the chaperonin (HSP60) family. Forms a cylinder of 14 subunits composed of two heptameric rings stacked back-to-back. Interacts with the co-chaperonin GroES.

The protein resides in the cytoplasm. It catalyses the reaction ATP + H2O + a folded polypeptide = ADP + phosphate + an unfolded polypeptide.. Its function is as follows. Together with its co-chaperonin GroES, plays an essential role in assisting protein folding. The GroEL-GroES system forms a nano-cage that allows encapsulation of the non-native substrate proteins and provides a physical environment optimized to promote and accelerate protein folding. In Streptococcus pneumoniae (strain Hungary19A-6), this protein is Chaperonin GroEL.